A 244-amino-acid polypeptide reads, in one-letter code: MAEMKNLKIEVVRYNPEVDTAPHSAFYEVPYDATTSLLDALGYIKDNLAPDLSYRWSCRMAICGSCGMMVNNVPKLACKTFLRDYTDGMKVEALANFPIERDLVVDMTHFIESLEAIKPYIIGNSRTADQGTNIQTPAQMAKYHQFSGCINCGLCYAACPQFGLNPEFIGPAAITLAHRYNEDSRDHGKKERMAQLNSQNGVWSCTFVGYCSEVCPKHVDPAAAIQQGKVESSKDFLIATLKPR.

Position 14 (Tyr-14) interacts with a menaquinone. The 2Fe-2S ferredoxin-type domain occupies 16-97 (PEVDTAPHSA…GMKVEALANF (82 aa)). Cys-58, Cys-63, Cys-66, and Cys-78 together coordinate [2Fe-2S] cluster. The 30-residue stretch at 140–169 (MAKYHQFSGCINCGLCYAACPQFGLNPEFI) folds into the 4Fe-4S ferredoxin-type domain. Positions 149, 152, and 155 each coordinate [4Fe-4S] cluster. [3Fe-4S] cluster contacts are provided by Cys-159, Cys-205, and Cys-211. Cys-215 is a binding site for [4Fe-4S] cluster. Residue 226 to 229 (QQGK) participates in a menaquinone binding.

This sequence belongs to the succinate dehydrogenase/fumarate reductase iron-sulfur protein family. Fumarate dehydrogenase forms part of an enzyme complex containing four subunits: a flavoprotein, an iron-sulfur, and two hydrophobic anchor proteins. [2Fe-2S] cluster is required as a cofactor. The cofactor is [3Fe-4S] cluster. Requires [4Fe-4S] cluster as cofactor.

The protein resides in the cell inner membrane. The enzyme catalyses a quinone + succinate = fumarate + a quinol. The catalysed reaction is a menaquinone + succinate = a menaquinol + fumarate. In terms of biological role, two distinct, membrane-bound, FAD-containing enzymes are responsible for the catalysis of fumarate and succinate interconversion; the fumarate reductase is used in anaerobic growth, and the succinate dehydrogenase is used in aerobic growth. The sequence is that of Fumarate reductase iron-sulfur subunit (frdB) from Escherichia coli O157:H7.